The sequence spans 130 residues: Glycine cleavage system H protein (130 aa).

The Lipoyl-binding domain occupies 25-107 (IATIGITEFA…YGEGWFLKVR (83 aa)). Lys-66 bears the N6-lipoyllysine mark.

This sequence belongs to the GcvH family. As to quaternary structure, the glycine cleavage system is composed of four proteins: P, T, L and H. Requires (R)-lipoate as cofactor.

Functionally, the glycine cleavage system catalyzes the degradation of glycine. The H protein shuttles the methylamine group of glycine from the P protein to the T protein. The chain is Glycine cleavage system H protein from Trichormus variabilis (strain ATCC 29413 / PCC 7937) (Anabaena variabilis).